The primary structure comprises 385 residues: Phospho-N-acetylmuramoyl-pentapeptide-transferase (385 aa).

The next 10 membrane-spanning stretches (helical) occupy residues 23–43 (FITV…LGAG), 79–99 (MGGI…GAVA), 103–123 (VWLS…DDYV), 135–155 (AWYK…VLYF), 186–206 (LGVD…VTAV), 218–238 (GLTT…VYVS), 258–278 (LTVF…YNGY), 282–302 (VFMG…TILM), 307–327 (LLLP…IVQT), and 362–382 (KIVT…LLIL).

Belongs to the glycosyltransferase 4 family. MraY subfamily. The cofactor is Mg(2+).

The protein localises to the cell inner membrane. The catalysed reaction is UDP-N-acetyl-alpha-D-muramoyl-L-alanyl-gamma-D-glutamyl-meso-2,6-diaminopimeloyl-D-alanyl-D-alanine + di-trans,octa-cis-undecaprenyl phosphate = di-trans,octa-cis-undecaprenyl diphospho-N-acetyl-alpha-D-muramoyl-L-alanyl-D-glutamyl-meso-2,6-diaminopimeloyl-D-alanyl-D-alanine + UMP. Its pathway is cell wall biogenesis; peptidoglycan biosynthesis. Catalyzes the initial step of the lipid cycle reactions in the biosynthesis of the cell wall peptidoglycan: transfers peptidoglycan precursor phospho-MurNAc-pentapeptide from UDP-MurNAc-pentapeptide onto the lipid carrier undecaprenyl phosphate, yielding undecaprenyl-pyrophosphoryl-MurNAc-pentapeptide, known as lipid I. In Salinibacter ruber (strain DSM 13855 / M31), this protein is Phospho-N-acetylmuramoyl-pentapeptide-transferase.